The chain runs to 378 residues: MSGAGVAAGTRPPSSPTPGSRRRRQRPSVGVQSLRPQSPQLRQSDPQKRNLDLEKSLQFLQQQHSEMLAKLHEEIEHLKRENKDLHYKLIMNQTSQKKDGPSGNHLSRASAPLGARWVCINGVWVEPGGPSPARLKEGSSRTHRPGGKRGRLAGGSADTVRSPADSLSMSSFQSVKSISNSGKARPQPGSFNKQDSKADVSQKADLEEEPLLHNSKLDKVPGVQGQARKEKAEASNAGAACMGNSQHQGRQMGAGAHPPMILPLPLRKPTTLRQCEVLIRELWNTNLLQTQELRHLKSLLEGSQRPQAAPEEASFPRDQEATHFPKVSTKSLSKKCLSPPVAERAILPALKQTPKNNFAERQKRLQAMQKRRLHRSVL.

3 disordered regions span residues 1-52 (MSGA…RNLD), 128-211 (GGPS…EEPL), and 301-328 (EGSQ…PKVS). Polar residues predominate over residues 34-44 (LRPQSPQLRQS). A coiled-coil region spans residues 47–90 (QKRNLDLEKSLQFLQQQHSEMLAKLHEEIEHLKRENKDLHYKLI). The segment covering 141 to 151 (RTHRPGGKRGR) has biased composition (basic residues). The segment covering 165 to 182 (DSLSMSSFQSVKSISNSG) has biased composition (polar residues). Composition is skewed to basic and acidic residues over residues 194 to 205 (QDSKADVSQKAD) and 314 to 323 (SFPRDQEATH).

In Homo sapiens (Human), this protein is Coiled-coil domain-containing protein 74A (CCDC74A).